Consider the following 146-residue polypeptide: 3-hydroxyacyl-[acyl-carrier-protein] dehydratase FabZ (146 aa).

Histidine 47 is an active-site residue.

The protein belongs to the thioester dehydratase family. FabZ subfamily.

It is found in the cytoplasm. It catalyses the reaction a (3R)-hydroxyacyl-[ACP] = a (2E)-enoyl-[ACP] + H2O. Functionally, involved in unsaturated fatty acids biosynthesis. Catalyzes the dehydration of short chain beta-hydroxyacyl-ACPs and long chain saturated and unsaturated beta-hydroxyacyl-ACPs. This chain is 3-hydroxyacyl-[acyl-carrier-protein] dehydratase FabZ, found in Nitrosospira multiformis (strain ATCC 25196 / NCIMB 11849 / C 71).